Here is a 666-residue protein sequence, read N- to C-terminus: Peptidase S41 family protein phomP1' (666 aa).

Residues 1–27 (MSSFLVQTAVVRLFLLGVVFWFPFALS) form the signal peptide. N-linked (GlcNAc...) asparagine glycosylation is found at asparagine 70, asparagine 214, and asparagine 234. Positions 303–504 (DVAVLQITSF…LLQAQGVRTV (202 aa)) are peptidase S41 domain. N-linked (GlcNAc...) asparagine glycans are attached at residues asparagine 555 and asparagine 612.

Belongs to the peptidase S41A family.

The protein operates within mycotoxin biosynthesis. In terms of biological role, peptidase S41 family protein; part of the gene cluster that mediates the biosynthesis of the phomopsins, a group of hexapeptide mycotoxins which infects lupins and causes lupinosis disease in livestock. Within the pathway, phomP1 and phomP1' are probably involved in the processing of the phomA and phomA' precursors. The pathway starts with the processing of the precursor phomA by several endopeptidases including kexin proteases as well as the cluster-specific S41 family peptidase phomP1 and the oligopeptidase phomG to produce 10 identical copies of the hexapeptide Tyr-Val-Ile-Pro-Ile-Asp. After being excised from the precursor peptide, the core peptides are cyclized and modified post-translationally by enzymes encoded within the gene cluster. The timing and order of proteolysis of the phomA precursor and PTMs are still unknown. Two tyrosinase-like enzymes, phomQ1 and phomQ2, catalyze the chlorination and hydroxylation of Tyr, respectively. PhomYb, is proposed to be involved in the construction of the macrocyclic structure. The other 4 ustYa family proteins may be involved in PTMs that generate the unique structure of phomopsin A. PhomYa is required for the hydroxylation of C-beta of Tyr. PhomYc, phomYd, and phomYe are responsible for the biosynthesis of 2,3-dehydroisoleucine (dIle), 2,3-dehydroaspartic acid (dAsp), and 3,4-dehydroproline (dPro), respectively. While dIle formation by phomYc is indispensable for the installation of dAsp by phomYd, the order of the other PTMs have not been elucidated yet. Most of the biosynthetic enzymes likely have broad substrate specificity, and thus, there might be a metabolic grid from a precursor to phomopsin A. The enzyme(s) responsible for the biosynthesis of 3,4-dehydrovaline (dVal) have also not been identified yet. Finally, phomM acts as an S-adenosylmethionine-dependent alpha-N-methyltransferase that catalyzes two successive N-methylation reactions, converting N-desmethyl-phomopsin A to phomopsin A and phomopsin A further to an N,N-dimethylated congener called phomopsin E. In Diaporthe leptostromiformis (Lupinosis disease fungus), this protein is Peptidase S41 family protein phomP1'.